Reading from the N-terminus, the 403-residue chain is Protein Bel-2 (403 aa).

It belongs to the spumavirus protein Bel-2 family.

The polypeptide is Protein Bel-2 (bel2) (Homo sapiens (Human)).